A 276-amino-acid chain; its full sequence is NH(3)-dependent NAD(+) synthetase (276 aa).

43 to 50 is a binding site for ATP; that stretch reads GISGGVDS. Position 49 (Asp-49) interacts with Mg(2+). Arg-146 serves as a coordination point for deamido-NAD(+). Thr-166 provides a ligand contact to ATP. Glu-171 lines the Mg(2+) pocket. Positions 179 and 186 each coordinate deamido-NAD(+). Positions 195 and 217 each coordinate ATP. Deamido-NAD(+) is bound at residue 266-267; that stretch reads HK.

It belongs to the NAD synthetase family. Homodimer.

It carries out the reaction deamido-NAD(+) + NH4(+) + ATP = AMP + diphosphate + NAD(+) + H(+). The protein operates within cofactor biosynthesis; NAD(+) biosynthesis; NAD(+) from deamido-NAD(+) (ammonia route): step 1/1. Functionally, catalyzes the ATP-dependent amidation of deamido-NAD to form NAD. Uses ammonia as a nitrogen source. This Shewanella baltica (strain OS223) protein is NH(3)-dependent NAD(+) synthetase.